Reading from the N-terminus, the 264-residue chain is 5'-nucleotidase SurE (264 aa).

Residues Asp-10, Asp-11, Ser-43, and Asn-99 each contribute to the a divalent metal cation site.

The protein belongs to the SurE nucleotidase family. A divalent metal cation serves as cofactor.

It localises to the cytoplasm. It catalyses the reaction a ribonucleoside 5'-phosphate + H2O = a ribonucleoside + phosphate. Nucleotidase that shows phosphatase activity on nucleoside 5'-monophosphates. This is 5'-nucleotidase SurE from Methanococcus maripaludis (strain C5 / ATCC BAA-1333).